A 138-amino-acid polypeptide reads, in one-letter code: Basic phospholipase A2 homolog Tpu-K49a (138 aa).

The signal sequence occupies residues 1 to 16; sequence MRTLWIMAVLLVGVEG. Cystine bridges form between Cys-42–Cys-131, Cys-44–Cys-60, Cys-59–Cys-111, Cys-65–Cys-138, Cys-66–Cys-104, and Cys-91–Cys-102. The tract at residues 121 to 133 is important for membrane-damaging activities in eukaryotes and bacteria; heparin-binding; sequence KKERINTKIFCKK.

As to quaternary structure, monomer. As to expression, expressed by the venom gland.

The protein localises to the secreted. Its function is as follows. Snake venom phospholipase A2 homolog that lacks catalytic activity. Induces local edema a few hours after injection in the hind foot. Is myotoxic. A model of myotoxic mechanism has been proposed: an apo Lys49-PLA2 is activated by the entrance of a hydrophobic molecule (e.g. fatty acid) at the hydrophobic channel of the protein leading to a reorientation of a monomer. This reorientation causes a transition between 'inactive' to 'active' states, causing alignment of C-terminal and membrane-docking sites (MDoS) side-by-side and putting the membrane-disruption sites (MDiS) in the same plane, exposed to solvent and in a symmetric position for both monomers. The MDoS region stabilizes the toxin on membrane by the interaction of charged residues with phospholipid head groups. Subsequently, the MDiS region destabilizes the membrane with penetration of hydrophobic residues. This insertion causes a disorganization of the membrane, allowing an uncontrolled influx of ions (i.e. calcium and sodium), and eventually triggering irreversible intracellular alterations and cell death. The sequence is that of Basic phospholipase A2 homolog Tpu-K49a from Craspedocephalus puniceus (Flat-nosed pitviper).